A 686-amino-acid chain; its full sequence is Chondroitin proteoglycan 1 (686 aa).

The first 18 residues, 1–18 (MLPKSVLIVAFLVASSSA), serve as a signal peptide directing secretion. An N-linked (GlcNAc...) asparagine glycan is attached at Asn46. Residues 63–120 (DTDCSTKEDGLYAIGGCSPQFLTCSGGIARIMDCPANLIYDQRIIACEYSYNVPECSG) enclose the Chitin-binding type-2 1 domain. Cysteines 96 and 109 form a disulfide. Asn143 carries N-linked (GlcNAc...) asparagine glycosylation. The Chitin-binding type-2 2 domain maps to 228–285 (DKTCNGKADGFYSFGQCSDHYIACSNGYTIPMQCPARLSFDEARVICDYTMNVPECQN). Cys261 and Cys274 are disulfide-bonded. The disordered stretch occupies residues 284 to 312 (QNGSGNYEGSAEETTTEASGELPYSNGYG). Residues Asn285, Asn635, and Asn664 are each glycosylated (N-linked (GlcNAc...) asparagine). The tract at residues 658–686 (KLRSATNRTSTKEATTRTQNMHAHYHRNH) is disordered.

In terms of biological role, required for polar body extrusion during cytokinesis in embryo development. Affects cortical granule size. Shown to have roles in meiotic chromosome segregation, osmotic barrier function and polarization in conjunction with cpg-2. Binds chitin. The sequence is that of Chondroitin proteoglycan 1 (cpg-1) from Caenorhabditis briggsae.